Consider the following 759-residue polypeptide: Phosphoribosylformylglycinamidine synthase subunit PurL (759 aa).

Histidine 46 is a catalytic residue. 2 residues coordinate ATP: tyrosine 49 and lysine 88. Position 90 (glutamate 90) interacts with Mg(2+). Substrate contacts are provided by residues 91–94 and arginine 113; that span reads SHNH. Histidine 92 functions as the Proton acceptor in the catalytic mechanism. Mg(2+) is bound at residue aspartate 114. Residue glutamine 237 participates in substrate binding. Residue aspartate 265 coordinates Mg(2+). A substrate-binding site is contributed by 309 to 311; it reads ESQ. 2 residues coordinate ATP: aspartate 498 and glycine 535. Asparagine 536 provides a ligand contact to Mg(2+). Position 538 (serine 538) interacts with substrate.

Belongs to the FGAMS family. In terms of assembly, monomer. Part of the FGAM synthase complex composed of 1 PurL, 1 PurQ and 2 PurS subunits.

It localises to the cytoplasm. It catalyses the reaction N(2)-formyl-N(1)-(5-phospho-beta-D-ribosyl)glycinamide + L-glutamine + ATP + H2O = 2-formamido-N(1)-(5-O-phospho-beta-D-ribosyl)acetamidine + L-glutamate + ADP + phosphate + H(+). It functions in the pathway purine metabolism; IMP biosynthesis via de novo pathway; 5-amino-1-(5-phospho-D-ribosyl)imidazole from N(2)-formyl-N(1)-(5-phospho-D-ribosyl)glycinamide: step 1/2. In terms of biological role, part of the phosphoribosylformylglycinamidine synthase complex involved in the purines biosynthetic pathway. Catalyzes the ATP-dependent conversion of formylglycinamide ribonucleotide (FGAR) and glutamine to yield formylglycinamidine ribonucleotide (FGAM) and glutamate. The FGAM synthase complex is composed of three subunits. PurQ produces an ammonia molecule by converting glutamine to glutamate. PurL transfers the ammonia molecule to FGAR to form FGAM in an ATP-dependent manner. PurS interacts with PurQ and PurL and is thought to assist in the transfer of the ammonia molecule from PurQ to PurL. This Anaeromyxobacter sp. (strain K) protein is Phosphoribosylformylglycinamidine synthase subunit PurL.